Here is a 104-residue protein sequence, read N- to C-terminus: Transcription elongation factor A protein-like 9 (104 aa).

Over residues 1-27 the composition is skewed to basic and acidic residues; that stretch reads MKSCQKMEGKPENESEPKHEEEPKPEE. The segment at 1–44 is disordered; the sequence is MKSCQKMEGKPENESEPKHEEEPKPEEKPEEEEKLEEEAKAKGT.

The protein belongs to the TFS-II family. TFA subfamily.

It localises to the nucleus. Its function is as follows. May be involved in transcriptional regulation. The polypeptide is Transcription elongation factor A protein-like 9 (Homo sapiens (Human)).